Reading from the N-terminus, the 228-residue chain is NAD(P)H-hydrate epimerase (228 aa).

Residues A9–L215 enclose the YjeF N-terminal domain. N58 to D62 contacts (6S)-NADPHX. N59 and D123 together coordinate K(+). (6S)-NADPHX contacts are provided by residues G127 to P133 and D156. S159 contributes to the K(+) binding site.

It belongs to the NnrE/AIBP family. Requires K(+) as cofactor.

It carries out the reaction (6R)-NADHX = (6S)-NADHX. The enzyme catalyses (6R)-NADPHX = (6S)-NADPHX. Functionally, catalyzes the epimerization of the S- and R-forms of NAD(P)HX, a damaged form of NAD(P)H that is a result of enzymatic or heat-dependent hydration. This is a prerequisite for the S-specific NAD(P)H-hydrate dehydratase to allow the repair of both epimers of NAD(P)HX. This Anopheles darlingi (Mosquito) protein is NAD(P)H-hydrate epimerase.